A 321-amino-acid chain; its full sequence is Protein-L-isoaspartate O-methyltransferase (321 aa).

The span at 21–31 shows a compositional bias: basic and acidic residues; the sequence is KPAERQREKRI. The tract at residues 21-65 is disordered; sequence KPAERQREKRISSGVNAVSLPTPARTASAERASSTPAPGPGPQRV. Residues 41 to 56 are compositionally biased toward low complexity; that stretch reads PTPARTASAERASSTP. The active site involves Ser-153.

This sequence belongs to the methyltransferase superfamily. L-isoaspartyl/D-aspartyl protein methyltransferase family.

The protein resides in the cytoplasm. It catalyses the reaction [protein]-L-isoaspartate + S-adenosyl-L-methionine = [protein]-L-isoaspartate alpha-methyl ester + S-adenosyl-L-homocysteine. Functionally, catalyzes the methyl esterification of L-isoaspartyl residues in peptides and proteins that result from spontaneous decomposition of normal L-aspartyl and L-asparaginyl residues. It plays a role in the repair and/or degradation of damaged proteins. In Ralstonia nicotianae (strain ATCC BAA-1114 / GMI1000) (Ralstonia solanacearum), this protein is Protein-L-isoaspartate O-methyltransferase.